The primary structure comprises 1153 residues: PPi-type phosphoenolpyruvate carboxykinase 2 (1153 aa).

A coiled-coil region spans residues 1085–1131; sequence RQKLEVAKLNKDLAYLNKTIAEKPRLVETLNKQIAAVKEELQYVSSE.

Belongs to the PPi-type phosphoenolpyruvate carboxykinase family. Monomer and trimer; forms heterotrimers with PEPCK1 and PEPCK3.

The protein localises to the cytoplasm. It is found in the cytosol. The catalysed reaction is oxaloacetate + diphosphate = phosphoenolpyruvate + phosphate + CO2. Inorganic pyrophosphate (PPi)-dependent phosphoenolpyruvate carboxykinase, which regulates the carbon flow of the central metabolism by fixing CO(2) to phosphoenolpyruvate to produce oxaloacetate. Can also produce pyruvate and diphosphate from phosphoenolpyruvate and phosphate. The chain is PPi-type phosphoenolpyruvate carboxykinase 2 from Entamoeba histolytica (strain ATCC 30459 / HM-1:IMSS / ABRM).